We begin with the raw amino-acid sequence, 491 residues long: 2-aminomuconic 6-semialdehyde dehydrogenase (491 aa).

Active-site residues include Glu-252 and Cys-286.

Belongs to the aldehyde dehydrogenase family. As to quaternary structure, homotrimer.

The enzyme catalyses 2-aminomuconate 6-semialdehyde + NAD(+) + H2O = (2Z,4E)-2-aminomuconate + NADH + 2 H(+). With respect to regulation, strongly inhibited by Ag(+) and Hg(+), and comnpletely inhibited by p-chloromercuribenzoic acid. Its function is as follows. Involved in the modified meta-cleavage pathway for 2-aminophenol catabolism. The enzyme is also active toward 2-hydroxymuconic 6-semialdehyde, acetaldehyde, propionaldehyde, and butyraldehyde. This chain is 2-aminomuconic 6-semialdehyde dehydrogenase (amnC), found in Pseudomonas sp.